The primary structure comprises 236 residues: Uridylate kinase (236 aa).

Residue 12 to 15 coordinates ATP; that stretch reads KLSG. Positions 20–25 are involved in allosteric activation by GTP; that stretch reads GEKGFG. Position 54 (glycine 54) interacts with UMP. ATP-binding residues include glycine 55 and arginine 59. UMP-binding positions include aspartate 72 and 133–140; that span reads TGNPYFST. The ATP site is built by asparagine 161, tyrosine 166, and aspartate 169.

Belongs to the UMP kinase family. Homohexamer.

It is found in the cytoplasm. The enzyme catalyses UMP + ATP = UDP + ADP. It functions in the pathway pyrimidine metabolism; CTP biosynthesis via de novo pathway; UDP from UMP (UMPK route): step 1/1. Its activity is regulated as follows. Allosterically activated by GTP. Inhibited by UTP. Its function is as follows. Catalyzes the reversible phosphorylation of UMP to UDP. This is Uridylate kinase from Alkaliphilus metalliredigens (strain QYMF).